Reading from the N-terminus, the 369-residue chain is Histidinol-phosphate aminotransferase (369 aa).

Residues 1-39 (MSFGIDDLPVRDELRGKSPYGAPQLDVPVRLNTNENPYP) form a disordered region. The residue at position 230 (lysine 230) is an N6-(pyridoxal phosphate)lysine.

The protein belongs to the class-II pyridoxal-phosphate-dependent aminotransferase family. Histidinol-phosphate aminotransferase subfamily. As to quaternary structure, homodimer. Pyridoxal 5'-phosphate serves as cofactor.

It catalyses the reaction L-histidinol phosphate + 2-oxoglutarate = 3-(imidazol-4-yl)-2-oxopropyl phosphate + L-glutamate. Its pathway is amino-acid biosynthesis; L-histidine biosynthesis; L-histidine from 5-phospho-alpha-D-ribose 1-diphosphate: step 7/9. The protein is Histidinol-phosphate aminotransferase (hisC) of Streptomyces avermitilis (strain ATCC 31267 / DSM 46492 / JCM 5070 / NBRC 14893 / NCIMB 12804 / NRRL 8165 / MA-4680).